We begin with the raw amino-acid sequence, 290 residues long: Endoplasmic reticulum-Golgi intermediate compartment protein 1 (290 aa).

Residues 1-26 are Cytoplasmic-facing; it reads MPFDFRRFDIYRKVPKDLTQPTYTGA. The chain crosses the membrane as a helical span at residues 27–47; it reads IISICCCLFILFLFLSELTGF. Topologically, residues 48 to 254 are lumenal; it reads ITTEVVNELY…RRQPLYRFIT (207 aa). An N-linked (GlcNAc...) asparagine glycan is attached at Asn74. The chain crosses the membrane as a helical span at residues 255 to 275; that stretch reads TICAIIGGTFTVAGILDSCIF. Residues 276–290 lie on the Cytoplasmic side of the membrane; sequence TASEAWKKIQLGKMH.

It belongs to the ERGIC family. As to quaternary structure, may form a heteromeric complex composed of ERGIC1, ERGIC2 and ERGIC3. Within the complex, the interaction with ERGIC3 is direct. Interacts with ERGIC3/ERV46. Post-translationally, N-glycosylated.

It is found in the endoplasmic reticulum membrane. The protein resides in the endoplasmic reticulum-Golgi intermediate compartment membrane. Its subcellular location is the golgi apparatus membrane. Functionally, possible role in transport between endoplasmic reticulum and Golgi. In Homo sapiens (Human), this protein is Endoplasmic reticulum-Golgi intermediate compartment protein 1 (ERGIC1).